The following is a 465-amino-acid chain: Ribulose bisphosphate carboxylase large chain (465 aa).

At Lys4 the chain carries N6,N6,N6-trimethyllysine. Substrate is bound by residues Asn113 and Thr163. Residue Lys165 is the Proton acceptor of the active site. Lys167 contacts substrate. Positions 191, 193, and 194 each coordinate Mg(2+). Lys191 bears the N6-carboxylysine mark. Catalysis depends on His284, which acts as the Proton acceptor. The substrate site is built by Arg285, His317, and Ser369.

The protein belongs to the RuBisCO large chain family. Type I subfamily. As to quaternary structure, heterohexadecamer of 8 large chains and 8 small chains; disulfide-linked. The disulfide link is formed within the large subunit homodimers. Requires Mg(2+) as cofactor. Post-translationally, the disulfide bond which can form in the large chain dimeric partners within the hexadecamer appears to be associated with oxidative stress and protein turnover.

It is found in the plastid. The protein localises to the chloroplast. It catalyses the reaction 2 (2R)-3-phosphoglycerate + 2 H(+) = D-ribulose 1,5-bisphosphate + CO2 + H2O. The catalysed reaction is D-ribulose 1,5-bisphosphate + O2 = 2-phosphoglycolate + (2R)-3-phosphoglycerate + 2 H(+). Functionally, ruBisCO catalyzes two reactions: the carboxylation of D-ribulose 1,5-bisphosphate, the primary event in carbon dioxide fixation, as well as the oxidative fragmentation of the pentose substrate in the photorespiration process. Both reactions occur simultaneously and in competition at the same active site. This Dillenia indica (Elephant apple) protein is Ribulose bisphosphate carboxylase large chain.